Consider the following 151-residue polypeptide: Metalloproteinase inhibitor 3 (151 aa).

The NTR domain maps to 1-108; it reads CNSDIVIRAK…GLNYRYHLGC (108 aa). Cystine bridges form between Cys1–Cys108, Cys115–Cys120, and Cys128–Cys149. Positions 53 to 54 are involved in metalloproteinase-binding; that stretch reads ES. A mediates interaction with EFEMP1 region spans residues 71 to 151; it reads GRVYDGKVYT…YQSKHYACIR (81 aa).

It belongs to the protease inhibitor I35 (TIMP) family. Interacts with EFEMP1.

The protein resides in the secreted. Its subcellular location is the extracellular space. It localises to the extracellular matrix. Complexes with metalloproteinases (such as collagenases) and irreversibly inactivates them by binding to their catalytic zinc cofactor. May form part of a tissue-specific acute response to remodeling stimuli. This chain is Metalloproteinase inhibitor 3 (TIMP3), found in Oryctolagus cuniculus (Rabbit).